The sequence spans 272 residues: Orotidine 5'-phosphate decarboxylase (272 aa).

Catalysis depends on Lys-95, which acts as the Proton donor.

Belongs to the OMP decarboxylase family. Type 2 subfamily.

It catalyses the reaction orotidine 5'-phosphate + H(+) = UMP + CO2. The protein operates within pyrimidine metabolism; UMP biosynthesis via de novo pathway; UMP from orotate: step 2/2. This Bordetella avium (strain 197N) protein is Orotidine 5'-phosphate decarboxylase.